A 787-amino-acid chain; its full sequence is MSFATSLPRPTTTGAAGFGLPLATCISLSVSHSFSPKFGICNNTSLRLKSKAGSGCYEGIHRSQLAASTILEGHTPINPEVESEKIRLIERIRLMFRSMDDGEISVSPYDTAWVALVEDIGGSGGPQFPTSLEWISNNQLDDGSWGDRKFVLYDRILNTLACVVALTTWKMHPNKCEKGLRFISDNIEKLADEDEELMPVGFEIALPSLIDLAKRLCIEIPDNSASIKNIYAKRDSKLKRIPMDLMHKKPTSLLFSLEGMEGLNWDKLLDFQSEGSFLSSPSSTAYALHHTKDELCLEYLLKAVKKFNGGVPNAYPVDMFEHLWSVDRLRRLGISRYFQVEIDECLDYVYRYWTNKGICWARNMCVQDSDDSSMGFRLLRLYGYDVSIDVFKQFEEGGQFCSIPGQMTHAITGMYNLYRASQLMFPQEHILADARNFTANLLHQKRVTNSIVDKWIITKDLPGEVAYALDVPFYASLPRLEARFFLEQYGGDDDVWIGKTLYRMLYVNCNTYLELAKLDYKHCQTVHQLEWNSMQTWYRECNLGEFGLSERSLLLAYYIAASTAFEPEKSSERLAWAITTILVETIMSQELSDEQKREFVDEFVNISIINNQNGGRYKPGNRLVEVLINTVTLMAEGRGTDQQLSNAWKNWLKTWEEGGDLGEAEARLLLHTIHLSSGLDESSFSHPKYQQLLEATSKVCHQLRLFQNLKANDAQGSTSRLVTVTTFQIEAGMQELVKLIFTKTLEDLTSATKQSFFNIARSFYYTAYCPADTIDSHINKVLFEKIV.

Residues 1-47 (MSFATSLPRPTTTGAAGFGLPLATCISLSVSHSFSPKFGICNNTSLR) constitute a chloroplast transit peptide. Residue Lys-237 coordinates substrate. Asp-368 and Asp-370 together coordinate Mg(2+). The DXDD motif motif lies at 368 to 371 (DSDD). A substrate-binding site is contributed by Lys-454.

It belongs to the terpene synthase family. Tpsc subfamily. Mg(2+) serves as cofactor. Expressed in peltate glandular trichomes of leaves. Highly expressed in the first leaf pair.

It localises to the plastid. Its subcellular location is the chloroplast. It catalyses the reaction (2E,6E,10E)-geranylgeranyl diphosphate = (-)-kolavenyl diphosphate. Its activity is regulated as follows. Inhibited by high concentrations of magnesium. Functionally, involved in the biosynthesis of clerodane diterpenoids natural products, including salvinorin A with potent agonistic activity on brain kappa-opioid receptors, thus conferring hallucinogenic properties. Diterpene synthase that catalyzes the formation of (-)-kolavenyl diphosphate from geranylgeranyl diphosphate (GGPP) as the first reaction in salvinorin A biosynthesis. The sequence is that of (-)-kolavenyl diphosphate synthase, chloroplastic from Salvia divinorum (Maria pastora).